A 144-amino-acid polypeptide reads, in one-letter code: D-aminoacyl-tRNA deacylase (144 aa).

Positions 136–137 match the Gly-cisPro motif, important for rejection of L-amino acids motif; it reads GP.

This sequence belongs to the DTD family. As to quaternary structure, homodimer.

The protein localises to the cytoplasm. It carries out the reaction glycyl-tRNA(Ala) + H2O = tRNA(Ala) + glycine + H(+). The catalysed reaction is a D-aminoacyl-tRNA + H2O = a tRNA + a D-alpha-amino acid + H(+). Functionally, an aminoacyl-tRNA editing enzyme that deacylates mischarged D-aminoacyl-tRNAs. Also deacylates mischarged glycyl-tRNA(Ala), protecting cells against glycine mischarging by AlaRS. Acts via tRNA-based rather than protein-based catalysis; rejects L-amino acids rather than detecting D-amino acids in the active site. By recycling D-aminoacyl-tRNA to D-amino acids and free tRNA molecules, this enzyme counteracts the toxicity associated with the formation of D-aminoacyl-tRNA entities in vivo and helps enforce protein L-homochirality. The sequence is that of D-aminoacyl-tRNA deacylase from Haemophilus influenzae (strain 86-028NP).